The primary structure comprises 401 residues: S-adenosylmethionine synthase (401 aa).

An ATP-binding site is contributed by 135–140 (GHGSGD).

It belongs to the AdoMet synthase 2 family. Mg(2+) is required as a cofactor.

The catalysed reaction is L-methionine + ATP + H2O = S-adenosyl-L-methionine + phosphate + diphosphate. It participates in amino-acid biosynthesis; S-adenosyl-L-methionine biosynthesis; S-adenosyl-L-methionine from L-methionine: step 1/1. Catalyzes the formation of S-adenosylmethionine from methionine and ATP. This is S-adenosylmethionine synthase from Methanobrevibacter smithii (strain ATCC 35061 / DSM 861 / OCM 144 / PS).